The primary structure comprises 623 residues: Peptidoglycan D,D-transpeptidase MrdA (623 aa).

Residues 17-37 traverse the membrane as a helical segment; the sequence is VIVAFGVVVVCFGILIFNLYN. Catalysis depends on Ser-326, which acts as the Acyl-ester intermediate.

This sequence belongs to the transpeptidase family. MrdA subfamily.

Its subcellular location is the cell inner membrane. The catalysed reaction is Preferential cleavage: (Ac)2-L-Lys-D-Ala-|-D-Ala. Also transpeptidation of peptidyl-alanyl moieties that are N-acyl substituents of D-alanine.. It participates in cell wall biogenesis; peptidoglycan biosynthesis. Catalyzes cross-linking of the peptidoglycan cell wall. In Salmonella typhimurium (strain SL1344), this protein is Peptidoglycan D,D-transpeptidase MrdA.